We begin with the raw amino-acid sequence, 126 residues long: MSSQQQKQPCTLPPQLQQHQVKQPCQPPPQEPCVPKTKEPCQPKVPEPCQPKVPEPCQPKVPEPCQPKVPQPCQPKVPEPCQPKVPEPCQPKVPEPCQPKVPEPCQSKVPQPCQPKVPEPCQTKQK.

Position 2 is an N-acetylserine (Ser2). Repeat copies occupy residues 3–14, 18–29, 31–38, 39–46, 47–54, 55–62, 63–70, 71–78, 79–86, 87–94, 95–102, 103–110, and 111–118. The segment at 3 to 29 is 2 X 12 AA approximate repeats; that stretch reads SQQQKQPCTLPPQLQQHQVKQPCQPPP. Residues 20–43 form a disordered region; that stretch reads QVKQPCQPPPQEPCVPKTKEPCQP. Residues 31 to 122 form an 11 X 8 AA approximate tandem repeats region; the sequence is EPCVPKTKEP…CQPKVPEPCQ (92 aa). Residues 104–126 form a disordered region; that stretch reads PCQSKVPQPCQPKVPEPCQTKQK.

This sequence belongs to the cornifin (SPRR) family. In terms of tissue distribution, suprabasal layers of squamous-differentiated tissues such as epidermis, esophagus, tongue and trachea.

Its subcellular location is the cytoplasm. Functionally, cross-linked envelope protein of keratinocytes. It is a keratinocyte protein that first appears in the cell cytosol, but ultimately becomes cross-linked to membrane proteins by transglutaminase. All that results in the formation of an insoluble envelope beneath the plasma membrane. The sequence is that of Cornifin alpha from Oryctolagus cuniculus (Rabbit).